We begin with the raw amino-acid sequence, 131 residues long: D-ribose pyranase (131 aa).

Residue H20 is the Proton donor of the active site. Substrate contacts are provided by residues D28, H98, and 120 to 122 (FSN).

This sequence belongs to the RbsD / FucU family. RbsD subfamily. As to quaternary structure, homodecamer.

It localises to the cytoplasm. It catalyses the reaction beta-D-ribopyranose = beta-D-ribofuranose. It functions in the pathway carbohydrate metabolism; D-ribose degradation; D-ribose 5-phosphate from beta-D-ribopyranose: step 1/2. Catalyzes the interconversion of beta-pyran and beta-furan forms of D-ribose. This chain is D-ribose pyranase, found in Lactobacillus acidophilus (strain ATCC 700396 / NCK56 / N2 / NCFM).